Consider the following 131-residue polypeptide: Ribosome-binding factor A (131 aa).

The protein belongs to the RbfA family. As to quaternary structure, monomer. Binds 30S ribosomal subunits, but not 50S ribosomal subunits or 70S ribosomes.

It is found in the cytoplasm. In terms of biological role, one of several proteins that assist in the late maturation steps of the functional core of the 30S ribosomal subunit. Associates with free 30S ribosomal subunits (but not with 30S subunits that are part of 70S ribosomes or polysomes). Required for efficient processing of 16S rRNA. May interact with the 5'-terminal helix region of 16S rRNA. The chain is Ribosome-binding factor A from Picosynechococcus sp. (strain ATCC 27264 / PCC 7002 / PR-6) (Agmenellum quadruplicatum).